The primary structure comprises 1278 residues: SMC5-SMC6 complex localization factor protein 2 (1278 aa).

Disordered stretches follow at residues 1 to 235, 248 to 337, 443 to 491, and 509 to 582; these read MTRR…LGAR, EQKK…KRTE, RINS…FIRH, and EPED…KETK. The span at 39–50 shows a compositional bias: basic and acidic residues; the sequence is KRTESPGDRKQS. Residues 94-103 are compositionally biased toward basic residues; sequence SSPKKLKPKR. 4 stretches are compositionally biased toward basic and acidic residues: residues 118 to 133, 156 to 174, 180 to 199, and 248 to 258; these read GGKE…ESRR, LPKE…ERRK, ESNR…DSRK, and EQKKLRKEQME. 2 stretches are compositionally biased toward polar residues: residues 259-277 and 318-329; these read QRIN…SLKS and SDSWELSGSKQN. Composition is skewed to basic and acidic residues over residues 449–463 and 469–489; these read KEQR…KSTK and KARE…EKFI. Over residues 519 to 540 the composition is skewed to polar residues; the sequence is ADSAPSNAGHHSSRNSDQVHSA. A Phosphoserine modification is found at Ser591. 3 disordered regions span residues 598-724, 739-764, and 798-820; these read PLNA…EEEE, RTPT…MKEY, and IRQG…DDGD. The span at 609 to 630 shows a compositional bias: basic and acidic residues; it reads PKKDKERSSSKERSGHSTESSK. 3 stretches are compositionally biased toward low complexity: residues 643–654, 666–675, and 688–697; these read SNESSGKNSGGS, PPAALEVVPS, and SGNSNAGSNA. Acidic residues predominate over residues 707 to 724; sequence DSDEESLGYTLESDEEEE. 3 positions are modified to phosphoserine: Ser708, Ser712, and Ser719. Residues 740 to 1278 are interaction with SIMC1; sequence TPTTSGKPPA…QLHDFWVPDS (539 aa). The tract at residues 769–1271 is NSE6-like domain; sequence TYTNTLERLV…NCRPTQGQLH (503 aa). A required for interaction with SLF1 and RAD18 region spans residues 807-1278; the sequence is PLRTGDQDST…QLHDFWVPDS (472 aa).

The protein belongs to the FAM178 family. Forms a heterodimer with SIMC1. Interacts with SLF1 (via N-terminus); this interaction links RAD18 to the SMC5-SMC6 complex. Interacts with RAD18; this interaction is increased in a SLF1-dependent manner. Interacts with SMC5 and SMC6.

The protein resides in the nucleus. It is found in the PML body. Plays a role in the DNA damage response (DDR) pathway by regulating postreplication repair of UV-damaged DNA and genomic stability maintenance. The SLF1-SLF2 complex acts to link RAD18 with the SMC5-SMC6 complex at replication-coupled interstrand cross-links (ICL) and DNA double-strand breaks (DSBs) sites on chromatin during DNA repair in response to stalled replication forks. Promotes the recruitment of the SMC5-SMC6 complex to DNA lesions. May play a role in SMC5-SMC6 complex recruitment for viral restriction. Forms a complex with SIMC1 and this complex is required to recruit SMC5-SMC6 complex to PML nuclear bodies and sites of viral replication. The chain is SMC5-SMC6 complex localization factor protein 2 from Mus musculus (Mouse).